Consider the following 346-residue polypeptide: Aspartate-semialdehyde dehydrogenase (346 aa).

NADP(+) is bound by residues 10–13 (TGQG) and 38–39 (RS). Arg-98 lines the phosphate pocket. Cys-131 (acyl-thioester intermediate) is an active-site residue. Gln-158 is a binding site for substrate. Residue 161 to 162 (SG) coordinates NADP(+). Lys-228 provides a ligand contact to phosphate. Substrate is bound at residue Arg-250. His-257 (proton acceptor) is an active-site residue. Asn-326 lines the NADP(+) pocket.

It belongs to the aspartate-semialdehyde dehydrogenase family. As to quaternary structure, homodimer.

The catalysed reaction is L-aspartate 4-semialdehyde + phosphate + NADP(+) = 4-phospho-L-aspartate + NADPH + H(+). It participates in amino-acid biosynthesis; L-lysine biosynthesis via DAP pathway; (S)-tetrahydrodipicolinate from L-aspartate: step 2/4. Its pathway is amino-acid biosynthesis; L-methionine biosynthesis via de novo pathway; L-homoserine from L-aspartate: step 2/3. It functions in the pathway amino-acid biosynthesis; L-threonine biosynthesis; L-threonine from L-aspartate: step 2/5. Its function is as follows. Catalyzes the NADPH-dependent formation of L-aspartate-semialdehyde (L-ASA) by the reductive dephosphorylation of L-aspartyl-4-phosphate. In Mycolicibacterium smegmatis (Mycobacterium smegmatis), this protein is Aspartate-semialdehyde dehydrogenase.